A 948-amino-acid polypeptide reads, in one-letter code: MKYLASFRTTLKVSRYLFRALALLIWLLIAFVSVFYIVNALHQRESEIRQEFNLSSDQAQRFIQRTSDVMKELKYIAENRLTAENGVMSSRARDDKMVVPDFEPLFADSDCAAMGSAWRGSLESLAWFMRYWRDNFSAAYDLNRVFLIGSDNLCMANFGLREMPVERDDALKALHERIMKYRNAPQEESGNNLFWISQGARQGVGYFYALTPVYLANRLQALLGVEQSIRMENFFTPGSLPMGVTIIDENGHSLISLTGPDGIIKAEPRWMQERSWFGYTPGFRELVLKKSLPPSSLSIVYSVPVDLVLERIRILILNAILLNVLVGAGLFTLARMYERRIFIPAESDAQRLEEHEQFNRKIVASAPVGICILRTIDGVNILSNELAHTYLNMLTHEDRQRLTQIICGQQVNFVDVLTSNNTNLQISFVHSRYRNENVAICVLVDVSTRVKMEESLQEMAQAAEQASQSKSMFLATVSHELRTPLYGIIGNLDLLQTKELPKGVERLVTAMNNSSSLLLKIISDILDFSKIESEQLKIEPREFSPREVMNHITANYLPLVVRKQLGLYCFIEPDVPVSLNGDPMRLQQVISNLLSNAIKFTDIGCIVLHVRCDGDYLSIRVRDTGVGIPAKEVVRLFDPFFQVGTGVQRNFQGTGLGLAICEKLISMMDGDISVDSEPGMGSQFTLRIPLYGAQYPVKKSVEGLAGTCCWLAVRNTSLCQFIETSLARSGVHTQRYEGQEPAADDILIVDDALEHTWQGRAAVVFCRRHIGIPLERAPGEWVHSVASVHELPALLARIYSIELDSEALSSALPTTDKTADSNDDMMILVVDDHPINRRLLADQLGSLGYQCKTANDGVDALNVLSKNAIDIVLSDVNMPNMDGYRLTQRIRQLGLTLPVVGVTANALAEEKQRCLESGMDSCLSKPVTLDVLKQTLAVYAERVRKTRA.

At 1-20 the chain is on the cytoplasmic side; that stretch reads MKYLASFRTTLKVSRYLFRA. The chain crosses the membrane as a helical span at residues 21–41; sequence LALLIWLLIAFVSVFYIVNAL. At 42–313 the chain is on the periplasmic side; the sequence is HQRESEIRQE…PVDLVLERIR (272 aa). A helical membrane pass occupies residues 314 to 334; that stretch reads ILILNAILLNVLVGAGLFTLA. Residues 335 to 948 are Cytoplasmic-facing; that stretch reads RMYERRIFIP…YAERVRKTRA (614 aa). Residues 357-425 form the PAS domain; it reads QFNRKIVASA…VLTSNNTNLQ (69 aa). One can recognise a Histidine kinase domain in the interval 476–692; it reads TVSHELRTPL…QFTLRIPLYG (217 aa). His-479 bears the Phosphohistidine; by autocatalysis mark. An ABL domain is found at 705 to 805; that stretch reads AGTCCWLAVR…ARIYSIELDS (101 aa). The 115-residue stretch at 826-940 folds into the Response regulatory domain; that stretch reads MILVVDDHPI…VLKQTLAVYA (115 aa). Asp-875 bears the 4-aspartylphosphate mark.

This sequence belongs to the RcsC family. In terms of assembly, interacts with RcsD. Post-translationally, autophosphorylated. Activation probably requires a transfer of a phosphate group from a His in the transmitter domain to an Asp in the receiver domain.

The protein resides in the cell inner membrane. It catalyses the reaction ATP + protein L-histidine = ADP + protein N-phospho-L-histidine.. Component of the Rcs signaling system, which controls transcription of numerous genes. RcsC functions as a membrane-associated protein kinase that phosphorylates RcsD in response to environmental signals. The phosphoryl group is then transferred to the response regulator RcsB. The sequence is that of Sensor histidine kinase RcsC from Salmonella typhimurium (strain LT2 / SGSC1412 / ATCC 700720).